The primary structure comprises 34 residues: Trypsin inhibitor 2 (34 aa).

The segment at residues Ser1–Gly34 is a cross-link (cyclopeptide (Ser-Gly)). Residues Asp4–Gly5 constitute a cross-link ((2-aminosuccinimidyl)acetic acid (Asp-Gly); alternate). Residues Asp4–Gly5 constitute a cross-link (isoaspartyl glycine isopeptide (Asp-Gly); alternate). 3 disulfides stabilise this stretch: Cys8/Cys25, Cys15/Cys27, and Cys21/Cys33.

Post-translationally, a cyclic succinimide probably forms by loss of water between Asp-4 and Gly-5, that can then rehydrate to either the original peptide bond or to a beta-aspartyl isopeptide bond. Three isoforms of MCoTI-II are detected, two with the parent molecular weight, corresponding to the unmodified and proposed isopeptide forms, and one with a molecular weight 18 Da lower, corresponding to a succinimide cross-linked form. This is a cyclic peptide.

The protein resides in the secreted. Functionally, inhibits trypsin; probably participates in a plant defense mechanism. The protein is Trypsin inhibitor 2 of Momordica cochinchinensis (Spiny bitter cucumber).